A 529-amino-acid chain; its full sequence is Variant surface glycoprotein MITAT 1.6 (529 aa).

The N-terminal stretch at 1–24 (MAVHRALAAYAISLYVLLPRKSGA) is a signal peptide. 2 cysteine pairs are disulfide-bonded: Cys-39/Cys-170 and Cys-147/Cys-214. The N-linked (GlcNAc...) (high mannose) asparagine glycan is linked to Asn-456. Asp-506 is lipidated: GPI-anchor amidated aspartate. A propeptide spans 507-529 (SSILVTKKFALTVVSAAFVALLF) (removed in mature form).

Post-translationally, N-glycosylated; glycan is composed of 6 to 9 mannose residues.

The protein resides in the cell membrane. In terms of biological role, VSG forms a coat on the surface of the parasite. The trypanosome evades the immune response of the host by expressing a series of antigenically distinct VSGs from an estimated 1000 VSG genes. The sequence is that of Variant surface glycoprotein MITAT 1.6 from Trypanosoma brucei brucei.